The following is a 154-amino-acid chain: Large ribosomal subunit protein uL22 (154 aa).

It belongs to the universal ribosomal protein uL22 family. As to quaternary structure, part of the 50S ribosomal subunit.

This protein binds specifically to 23S rRNA. It makes multiple contacts with different domains of the 23S rRNA in the assembled 50S subunit and ribosome. In terms of biological role, the globular domain of the protein is located near the polypeptide exit tunnel on the outside of the subunit, while an extended beta-hairpin is found that lines the wall of the exit tunnel in the center of the 70S ribosome. This Natronomonas pharaonis (strain ATCC 35678 / DSM 2160 / CIP 103997 / JCM 8858 / NBRC 14720 / NCIMB 2260 / Gabara) (Halobacterium pharaonis) protein is Large ribosomal subunit protein uL22.